Consider the following 367-residue polypeptide: Cobalt-precorrin-5B C(1)-methyltransferase (367 aa).

This sequence belongs to the CbiD family.

It catalyses the reaction Co-precorrin-5B + S-adenosyl-L-methionine = Co-precorrin-6A + S-adenosyl-L-homocysteine. It participates in cofactor biosynthesis; adenosylcobalamin biosynthesis; cob(II)yrinate a,c-diamide from sirohydrochlorin (anaerobic route): step 6/10. Catalyzes the methylation of C-1 in cobalt-precorrin-5B to form cobalt-precorrin-6A. The chain is Cobalt-precorrin-5B C(1)-methyltransferase from Leptospira interrogans serogroup Icterohaemorrhagiae serovar copenhageni (strain Fiocruz L1-130).